A 545-amino-acid polypeptide reads, in one-letter code: Capsular polysaccharide phosphotransferase SacB (545 aa).

It belongs to the stealth family.

Its function is as follows. May be the polymerase that links individual UDP-N-acetyl-D-mannosamine monomers. In serotype A the capsule is composed of repeated units of (alpha 1-6)-linked N-acetyl-D-mannosamine-1-phosphate. This is Capsular polysaccharide phosphotransferase SacB (sacB) from Neisseria meningitidis serogroup A.